Here is a 138-residue protein sequence, read N- to C-terminus: Fluoride-specific ion channel FluC (138 aa).

4 helical membrane passes run 34–54 (FMPK…GACA), 60–80 (MQFG…SFLM), 88–108 (FWGT…VVLV), and 112–132 (LPHA…AWLM). Na(+) contacts are provided by G95 and T98.

Belongs to the fluoride channel Fluc/FEX (TC 1.A.43) family.

The protein localises to the cell membrane. It carries out the reaction fluoride(in) = fluoride(out). Na(+) is not transported, but it plays an essential structural role and its presence is essential for fluoride channel function. Its function is as follows. Fluoride-specific ion channel. Important for reducing fluoride concentration in the cell, thus reducing its toxicity. In Corynebacterium efficiens (strain DSM 44549 / YS-314 / AJ 12310 / JCM 11189 / NBRC 100395), this protein is Fluoride-specific ion channel FluC.